Reading from the N-terminus, the 129-residue chain is MSVWQGRSRRKPTGGLYRPARKKRKYEMGREPIETHVAEEAFKIKKVRTRGGNLKVKVVRTGFANVLDPETGTCKKVKIITVRENKANIHYVRRNVITKGAIIETEIGLAKVTSRPGQDGTVNAILIKE.

The segment at 1–29 (MSVWQGRSRRKPTGGLYRPARKKRKYEMG) is disordered.

This sequence belongs to the eukaryotic ribosomal protein eS8 family. In terms of assembly, part of the 30S ribosomal subunit.

The polypeptide is Small ribosomal subunit protein eS8 (rps8e) (Methanocaldococcus jannaschii (strain ATCC 43067 / DSM 2661 / JAL-1 / JCM 10045 / NBRC 100440) (Methanococcus jannaschii)).